We begin with the raw amino-acid sequence, 336 residues long: CMP-sialic acid transporter (336 aa).

At 1–9 the chain is on the cytoplasmic side; the sequence is MAQARENVS. Residues 10-30 form a helical membrane-spanning segment; that stretch reads LFFKLYCLAVMTLVAAAYTVA. Over 31–45 the chain is Lumenal; the sequence is LRYTRTTAKELYFST. A helical transmembrane segment spans residues 46–64; the sequence is TAVCVTEVIKLLISVGLLA. Residue Lys55 participates in CMP-N-acetyl-beta-neuraminate binding. Residues 65–87 lie on the Cytoplasmic side of the membrane; the sequence is KETGSLGRFKASLSENVLGSPKE. Residues 88–108 form a helical membrane-spanning segment; the sequence is LMKLSVPSLVYAVQNNMAFLA. CMP-N-acetyl-beta-neuraminate is bound at residue 101 to 102; that stretch reads QN. Residues 109–114 lie on the Lumenal side of the membrane; it reads LSNLDA. Residues 115–135 form a helical membrane-spanning segment; that stretch reads AVYQVTYQLKIPCTALCTVLM. 117-124 serves as a coordination point for CMP-N-acetyl-beta-neuraminate; the sequence is YQVTYQLK. Residues 136-141 lie on the Cytoplasmic side of the membrane; it reads LNRTLS. The helical transmembrane segment at 142-160 threads the bilayer; it reads KLQWVSVFMLCGGVILVQW. At 161 to 175 the chain is on the lumenal side; that stretch reads KPAQATKVVVEQSPL. The helical transmembrane segment at 176–196 threads the bilayer; that stretch reads LGFGAIAIAVLCSGFAGVYFE. A CMP-N-acetyl-beta-neuraminate-binding site is contributed by Ser188. Residues 197-209 lie on the Cytoplasmic side of the membrane; that stretch reads KVLKSSDTSLWVR. Position 210-214 (210-214) interacts with CMP-N-acetyl-beta-neuraminate; the sequence is NIQMY. The helical transmembrane segment at 210–228 threads the bilayer; sequence NIQMYLSGIVVTLVGTYLS. Topologically, residues 229-243 are lumenal; that stretch reads DGAEIKEKGFFYGYT. A helical transmembrane segment spans residues 244–262; sequence YYVWFVIFLASVGGLYTSV. The Cytoplasmic segment spans residues 263–269; the sequence is VVKYTDN. Residues 270 to 288 form a helical membrane-spanning segment; sequence IMKGFSAAAAIVLSTIASV. A CMP-N-acetyl-beta-neuraminate-binding site is contributed by Lys272. At 289 to 296 the chain is on the lumenal side; it reads MLFGLQIT. The helical transmembrane segment at 297 to 315 threads the bilayer; that stretch reads LSFAMGALLVCISIYLYGL. Topologically, residues 316 to 336 are cytoplasmic; the sequence is PRQDTTCIQQEATSKERVIGV. The tract at residues 316–336 is disordered; it reads PRQDTTCIQQEATSKERVIGV.

Belongs to the nucleotide-sugar transporter family. SLC35A subfamily. As to quaternary structure, monomer.

The protein localises to the golgi apparatus membrane. The catalysed reaction is CMP-N-acetyl-beta-neuraminate(in) + CMP(out) = CMP-N-acetyl-beta-neuraminate(out) + CMP(in). It carries out the reaction CMP-N-acetyl-beta-neuraminate(in) + AMP(out) = CMP-N-acetyl-beta-neuraminate(out) + AMP(in). The enzyme catalyses CDP-L-ribitol(in) + CDP(out) = CDP-L-ribitol(out) + CDP(in). It catalyses the reaction UMP(out) + CMP-N-acetyl-beta-neuraminate(in) = UMP(in) + CMP-N-acetyl-beta-neuraminate(out). In terms of biological role, transports CMP-sialic acid from the cytosol into the Golgi apparatus, functioning as an antiporter that exchanges CMP-sialic acid for CMP. Binds both CMP-sialic acid and free CMP, but has higher affinity for free CMP. Also able to exchange CMP-sialic acid for AMP and UMP. Also mediates the transport of CDP-ribitol. The sequence is that of CMP-sialic acid transporter (SLC35A1) from Cricetulus griseus (Chinese hamster).